We begin with the raw amino-acid sequence, 336 residues long: Tetraacyldisaccharide 4'-kinase (336 aa).

60–67 (TVGGTGKT) provides a ligand contact to ATP.

Belongs to the LpxK family.

The catalysed reaction is a lipid A disaccharide + ATP = a lipid IVA + ADP + H(+). It functions in the pathway glycolipid biosynthesis; lipid IV(A) biosynthesis; lipid IV(A) from (3R)-3-hydroxytetradecanoyl-[acyl-carrier-protein] and UDP-N-acetyl-alpha-D-glucosamine: step 6/6. Transfers the gamma-phosphate of ATP to the 4'-position of a tetraacyldisaccharide 1-phosphate intermediate (termed DS-1-P) to form tetraacyldisaccharide 1,4'-bis-phosphate (lipid IVA). This is Tetraacyldisaccharide 4'-kinase from Pseudomonas fluorescens (strain SBW25).